Consider the following 356-residue polypeptide: UDP-N-acetylglucosamine--N-acetylmuramyl-(pentapeptide) pyrophosphoryl-undecaprenol N-acetylglucosamine transferase (356 aa).

UDP-N-acetyl-alpha-D-glucosamine-binding residues include R166, S196, and Q290.

This sequence belongs to the glycosyltransferase 28 family. MurG subfamily.

It localises to the cell membrane. The enzyme catalyses Mur2Ac(oyl-L-Ala-gamma-D-Glu-L-Lys-D-Ala-D-Ala)-di-trans,octa-cis-undecaprenyl diphosphate + UDP-N-acetyl-alpha-D-glucosamine = beta-D-GlcNAc-(1-&gt;4)-Mur2Ac(oyl-L-Ala-gamma-D-Glu-L-Lys-D-Ala-D-Ala)-di-trans,octa-cis-undecaprenyl diphosphate + UDP + H(+). Its pathway is cell wall biogenesis; peptidoglycan biosynthesis. Functionally, cell wall formation. Catalyzes the transfer of a GlcNAc subunit on undecaprenyl-pyrophosphoryl-MurNAc-pentapeptide (lipid intermediate I) to form undecaprenyl-pyrophosphoryl-MurNAc-(pentapeptide)GlcNAc (lipid intermediate II). This chain is UDP-N-acetylglucosamine--N-acetylmuramyl-(pentapeptide) pyrophosphoryl-undecaprenol N-acetylglucosamine transferase, found in Staphylococcus aureus (strain USA300).